The chain runs to 431 residues: Adenylosuccinate synthetase (431 aa).

GTP-binding positions include 12–18 (GDEGKGK) and 40–42 (GHT). The active-site Proton acceptor is D13. Mg(2+)-binding residues include D13 and G40. Residues 13-16 (DEGK), 38-41 (NAGH), T131, R145, Q225, T240, and R304 contribute to the IMP site. Residue H41 is the Proton donor of the active site. 300–306 (TTTGRKR) provides a ligand contact to substrate. Residues R306, 332–334 (KLD), and 414–416 (STS) contribute to the GTP site.

Belongs to the adenylosuccinate synthetase family. Homodimer. It depends on Mg(2+) as a cofactor.

Its subcellular location is the cytoplasm. It catalyses the reaction IMP + L-aspartate + GTP = N(6)-(1,2-dicarboxyethyl)-AMP + GDP + phosphate + 2 H(+). Its pathway is purine metabolism; AMP biosynthesis via de novo pathway; AMP from IMP: step 1/2. Functionally, plays an important role in the de novo pathway of purine nucleotide biosynthesis. Catalyzes the first committed step in the biosynthesis of AMP from IMP. This Dinoroseobacter shibae (strain DSM 16493 / NCIMB 14021 / DFL 12) protein is Adenylosuccinate synthetase.